Reading from the N-terminus, the 161-residue chain is UPF0225 protein NTHI0386 (161 aa).

This sequence belongs to the UPF0225 family.

This Haemophilus influenzae (strain 86-028NP) protein is UPF0225 protein NTHI0386.